Reading from the N-terminus, the 159-residue chain is Transcriptional repressor NrdR (159 aa).

Residues 3 to 34 (CPTCQNTDSRVLESRSADTGKSVRRRRECLNC) fold into a zinc finger. One can recognise an ATP-cone domain in the interval 49 to 139 (ISVLKKDGSR…VYRKFNGVKD (91 aa)).

It belongs to the NrdR family. Requires Zn(2+) as cofactor.

In terms of biological role, negatively regulates transcription of bacterial ribonucleotide reductase nrd genes and operons by binding to NrdR-boxes. The chain is Transcriptional repressor NrdR from Prochlorococcus marinus (strain MIT 9515).